The following is a 244-amino-acid chain: 7-cyano-7-deazaguanine synthase (244 aa).

14–24 (FSGGQDSATCV) lines the ATP pocket. Zn(2+) contacts are provided by C202, C217, C220, and C223.

It belongs to the QueC family. Zn(2+) serves as cofactor.

The catalysed reaction is 7-carboxy-7-deazaguanine + NH4(+) + ATP = 7-cyano-7-deazaguanine + ADP + phosphate + H2O + H(+). Its pathway is purine metabolism; 7-cyano-7-deazaguanine biosynthesis. Its function is as follows. Catalyzes the ATP-dependent conversion of 7-carboxy-7-deazaguanine (CDG) to 7-cyano-7-deazaguanine (preQ(0)). This chain is 7-cyano-7-deazaguanine synthase, found in Burkholderia cenocepacia (strain ATCC BAA-245 / DSM 16553 / LMG 16656 / NCTC 13227 / J2315 / CF5610) (Burkholderia cepacia (strain J2315)).